A 76-amino-acid chain; its full sequence is MIYKVFYQETKERSPRRENTQALYLDIDAASELEGRIKARKMVEEHTDYNVEFIELLSDKHLDYEKETGVFTLTEF.

Belongs to the RNA polymerase subunit epsilon family. As to quaternary structure, RNAP is composed of a core of 2 alpha, a beta and a beta' subunit. The core is associated with a delta subunit, and at least one of epsilon or omega. When a sigma factor is associated with the core the holoenzyme is formed, which can initiate transcription.

The enzyme catalyses RNA(n) + a ribonucleoside 5'-triphosphate = RNA(n+1) + diphosphate. Functionally, a non-essential component of RNA polymerase (RNAP). The protein is DNA-directed RNA polymerase subunit epsilon of Streptococcus equi subsp. equi (strain 4047).